The chain runs to 934 residues: 2-oxoglutarate dehydrogenase E1 component (934 aa).

Belongs to the alpha-ketoglutarate dehydrogenase family. Homodimer. Part of the 2-oxoglutarate dehydrogenase (OGDH) complex composed of E1 (2-oxoglutarate dehydrogenase), E2 (dihydrolipoamide succinyltransferase) and E3 (dihydrolipoamide dehydrogenase); the complex contains multiple copies of the three enzymatic components (E1, E2 and E3). Thiamine diphosphate is required as a cofactor.

The enzyme catalyses N(6)-[(R)-lipoyl]-L-lysyl-[protein] + 2-oxoglutarate + H(+) = N(6)-[(R)-S(8)-succinyldihydrolipoyl]-L-lysyl-[protein] + CO2. E1 component of the 2-oxoglutarate dehydrogenase (OGDH) complex which catalyzes the decarboxylation of 2-oxoglutarate, the first step in the conversion of 2-oxoglutarate to succinyl-CoA and CO(2). The sequence is that of 2-oxoglutarate dehydrogenase E1 component (sucA) from Coxiella burnetii (strain RSA 493 / Nine Mile phase I).